The sequence spans 317 residues: Flagellar hook-associated protein 3 (317 aa).

Belongs to the bacterial flagellin family.

It localises to the secreted. The protein localises to the bacterial flagellum. The chain is Flagellar hook-associated protein 3 (flgL) from Escherichia coli (strain K12).